The following is a 1060-amino-acid chain: Carbamoyl phosphate synthase large chain (1060 aa).

A carboxyphosphate synthetic domain region spans residues 1 to 401 (MPKRTDIRKI…SLLKAVRSLE (401 aa)). ATP is bound by residues arginine 129, arginine 169, glycine 175, glycine 176, glutamine 208, isoleucine 210, glutamate 215, glycine 241, isoleucine 242, histidine 243, glutamine 284, and glutamate 298. The region spanning 133–327 (KNLMNQLNEP…IAKMAAKIAV (195 aa)) is the ATP-grasp 1 domain. Glutamine 284, glutamate 298, and asparagine 300 together coordinate Mg(2+). Glutamine 284, glutamate 298, and asparagine 300 together coordinate Mn(2+). Residues 402-546 (IGTAHLELDG…YTTYEQENES (145 aa)) form an oligomerization domain region. The tract at residues 547 to 929 (LVSAKPSILV…ALYKAFEASG (383 aa)) is carbamoyl phosphate synthetic domain. Positions 671–861 (DQLIQELNIP…MAQLATQLIL (191 aa)) constitute an ATP-grasp 2 domain. ATP is bound by residues arginine 707, arginine 746, leucine 748, glutamate 752, glycine 777, valine 778, histidine 779, serine 780, glutamine 820, and glutamate 832. Residues glutamine 820, glutamate 832, and asparagine 834 each contribute to the Mg(2+) site. The Mn(2+) site is built by glutamine 820, glutamate 832, and asparagine 834. The 131-residue stretch at 930–1060 (MHLPSHGNVL…ESQSLLTKPL (131 aa)) folds into the MGS-like domain. Residues 930–1060 (MHLPSHGNVL…ESQSLLTKPL (131 aa)) form an allosteric domain region.

The protein belongs to the CarB family. In terms of assembly, composed of two chains; the small (or glutamine) chain promotes the hydrolysis of glutamine to ammonia, which is used by the large (or ammonia) chain to synthesize carbamoyl phosphate. Tetramer of heterodimers (alpha,beta)4. The cofactor is Mg(2+). Requires Mn(2+) as cofactor.

It catalyses the reaction hydrogencarbonate + L-glutamine + 2 ATP + H2O = carbamoyl phosphate + L-glutamate + 2 ADP + phosphate + 2 H(+). It carries out the reaction hydrogencarbonate + NH4(+) + 2 ATP = carbamoyl phosphate + 2 ADP + phosphate + 2 H(+). It participates in amino-acid biosynthesis; L-arginine biosynthesis; carbamoyl phosphate from bicarbonate: step 1/1. Its pathway is pyrimidine metabolism; UMP biosynthesis via de novo pathway; (S)-dihydroorotate from bicarbonate: step 1/3. Large subunit of the glutamine-dependent carbamoyl phosphate synthetase (CPSase). CPSase catalyzes the formation of carbamoyl phosphate from the ammonia moiety of glutamine, carbonate, and phosphate donated by ATP, constituting the first step of 2 biosynthetic pathways, one leading to arginine and/or urea and the other to pyrimidine nucleotides. The large subunit (synthetase) binds the substrates ammonia (free or transferred from glutamine from the small subunit), hydrogencarbonate and ATP and carries out an ATP-coupled ligase reaction, activating hydrogencarbonate by forming carboxy phosphate which reacts with ammonia to form carbamoyl phosphate. The sequence is that of Carbamoyl phosphate synthase large chain from Latilactobacillus sakei subsp. sakei (strain 23K) (Lactobacillus sakei subsp. sakei).